A 93-amino-acid chain; its full sequence is DNA-directed RNA polymerase subunit omega (93 aa).

This sequence belongs to the RNA polymerase subunit omega family. In terms of assembly, the RNAP catalytic core consists of 2 alpha, 1 beta, 1 beta' and 1 omega subunit. When a sigma factor is associated with the core the holoenzyme is formed, which can initiate transcription.

The catalysed reaction is RNA(n) + a ribonucleoside 5'-triphosphate = RNA(n+1) + diphosphate. In terms of biological role, promotes RNA polymerase assembly. Latches the N- and C-terminal regions of the beta' subunit thereby facilitating its interaction with the beta and alpha subunits. This is DNA-directed RNA polymerase subunit omega from Shewanella piezotolerans (strain WP3 / JCM 13877).